An 85-amino-acid chain; its full sequence is UPF0297 protein lhv_0439 (85 aa).

This sequence belongs to the UPF0297 family.

This Lactobacillus helveticus (strain DPC 4571) protein is UPF0297 protein lhv_0439.